Reading from the N-terminus, the 298-residue chain is Tyrosine recombinase XerC (298 aa).

In terms of domain architecture, Core-binding (CB) spans 1–85 (MKPIAAFQEY…SLRSFYRYLT (85 aa)). Residues 106 to 291 (HLPQFFYEAE…TMAHLKNEYM (186 aa)) enclose the Tyr recombinase domain. Active-site residues include R146, K170, H243, R246, and H269. Y278 (O-(3'-phospho-DNA)-tyrosine intermediate) is an active-site residue.

Belongs to the 'phage' integrase family. XerC subfamily. Forms a cyclic heterotetrameric complex composed of two molecules of XerC and two molecules of XerD.

It localises to the cytoplasm. Functionally, site-specific tyrosine recombinase, which acts by catalyzing the cutting and rejoining of the recombining DNA molecules. The XerC-XerD complex is essential to convert dimers of the bacterial chromosome into monomers to permit their segregation at cell division. It also contributes to the segregational stability of plasmids. This Lacticaseibacillus paracasei (strain ATCC 334 / BCRC 17002 / CCUG 31169 / CIP 107868 / KCTC 3260 / NRRL B-441) (Lactobacillus paracasei) protein is Tyrosine recombinase XerC.